The chain runs to 346 residues: D-alanine--D-alanine ligase (346 aa).

The ATP-grasp domain maps to 133 to 327; it reads KLYAKSVGVK…ALADQISLEK (195 aa). Position 159–211 (159–211) interacts with ATP; it reads LSFPCIIKPARLGSSIGISIVKDEKDLEYAKDVGFEFDNDLVVEEFKNNIKEY. 3 residues coordinate Mg(2+): Asp284, Glu296, and Asn298.

This sequence belongs to the D-alanine--D-alanine ligase family. The cofactor is Mg(2+). Mn(2+) is required as a cofactor.

It is found in the cytoplasm. The enzyme catalyses 2 D-alanine + ATP = D-alanyl-D-alanine + ADP + phosphate + H(+). Its pathway is cell wall biogenesis; peptidoglycan biosynthesis. Functionally, cell wall formation. The chain is D-alanine--D-alanine ligase from Campylobacter jejuni subsp. jejuni serotype O:23/36 (strain 81-176).